Reading from the N-terminus, the 271-residue chain is Phosphatidate cytidylyltransferase (271 aa).

Transmembrane regions (helical) follow at residues 12 to 32 (LLPI…ALFI), 53 to 73 (FGRV…YHLP), 75 to 95 (LAGA…VLVL), 111 to 131 (LGMG…LKQW), 136 to 156 (GLII…YFSG), 174 to 194 (WEGV…VGLY), 199 to 219 (LGAL…SIVG), and 251 to 271 (SLTA…WGAP).

It belongs to the CDS family.

The protein resides in the cell inner membrane. The catalysed reaction is a 1,2-diacyl-sn-glycero-3-phosphate + CTP + H(+) = a CDP-1,2-diacyl-sn-glycerol + diphosphate. The protein operates within phospholipid metabolism; CDP-diacylglycerol biosynthesis; CDP-diacylglycerol from sn-glycerol 3-phosphate: step 3/3. This Pseudomonas aeruginosa (strain ATCC 15692 / DSM 22644 / CIP 104116 / JCM 14847 / LMG 12228 / 1C / PRS 101 / PAO1) protein is Phosphatidate cytidylyltransferase (cdsA).